The sequence spans 567 residues: MNILNLKIIMFLLISNTIVVGGAWATSTCPDWPATRIAVEINALEQQLNKWSAAYHQQGHSPVTDDIYDQLQDKLRVWQSCRGLPDKTESQPIPGKGQFLHPVAHTGLKKLKDETALTRWMAGRKNLWVQPKVDGVAVTLVYHGGKLVQLLSRGNGVKGQNWTEKAPFISAIPQYIANAPALLTLQGELFLLMDGHQQAKSGGVNARSTVAGALMRKSPSPLLAQVGVFIWAWPDGPTTMKEKVALLQVMGFPFTAKYSEPVMSHLDVVQWRQFWFQAPLPFVTDGVVVRQEEEPAGRYWQATPGQWSMAWKYPPLQHIAEVKDIHFTLGRTGKGTVVLEVLPIKIDDKWIRRVNIGSVTRWKQWDIAPGDHITLALAGHGIPRLDNVVWRVHQRNTITAPNWDKFHQLSCFQRLPHGCEPQFLSRLIWLSGPGGLDIGGIGGGFWQELIHHELINDLVGWLLLTPEQIASIPGIGNARAEKIYQQFQRAKQQPFSRWLLALGFPQVVSVDAQWQVVLRRSLSEWATMAGIGQMRAKQIKHFWDHPDVQALADFLSTQKVVGFELTE.

Lys-132 acts as the N6-AMP-lysine intermediate in catalysis.

It belongs to the NAD-dependent DNA ligase family. LigB subfamily.

The enzyme catalyses NAD(+) + (deoxyribonucleotide)n-3'-hydroxyl + 5'-phospho-(deoxyribonucleotide)m = (deoxyribonucleotide)n+m + AMP + beta-nicotinamide D-nucleotide.. Its function is as follows. Catalyzes the formation of phosphodiester linkages between 5'-phosphoryl and 3'-hydroxyl groups in double-stranded DNA using NAD as a coenzyme and as the energy source for the reaction. This is DNA ligase B from Yersinia pestis bv. Antiqua (strain Angola).